Here is a 293-residue protein sequence, read N- to C-terminus: TBC1 domain family member 7 (293 aa).

Residues 50-231 (PLPSMYRALV…RVWDKVVSGS (182 aa)) form the Rab-GAP TBC domain.

Component of the TSC-TBC complex (also named Rhebulator complex), composed of 2 molecules of TSC1, 2 molecules of TSC2 and 1 molecule of TBC1D7. Interacts with TSC1 (via C-terminal half of the coiled-coil domain). Highly expressed in heart, and slightly in kidney, liver and placenta.

The protein localises to the lysosome membrane. It is found in the cytoplasmic vesicle. Its subcellular location is the cytoplasm. It localises to the cytosol. Its function is as follows. Non-catalytic component of the TSC-TBC complex, a multiprotein complex that acts as a negative regulator of the canonical mTORC1 complex, an evolutionarily conserved central nutrient sensor that stimulates anabolic reactions and macromolecule biosynthesis to promote cellular biomass generation and growth. The TSC-TBC complex acts as a GTPase-activating protein (GAP) for the small GTPase RHEB, a direct activator of the protein kinase activity of mTORC1. In absence of nutrients, the TSC-TBC complex inhibits mTORC1, thereby preventing phosphorylation of ribosomal protein S6 kinase (RPS6KB1 and RPS6KB2) and EIF4EBP1 (4E-BP1) by the mTORC1 signaling. The TSC-TBC complex is inactivated in response to nutrients, relieving inhibition of mTORC1. The protein is TBC1 domain family member 7 of Homo sapiens (Human).